Consider the following 263-residue polypeptide: Zinc transporter ZupT (263 aa).

Transmembrane regions (helical) follow at residues 1 to 21 (MLFA…GGLI), 37 to 57 (LGFS…PGAF), 68 to 88 (GGSW…AIID), 116 to 136 (MMKM…PEGF), and 138 to 158 (TFLA…AIAI). Asn-131 and Glu-134 together coordinate Fe(2+). Glu-134 contacts Zn(2+). A Zn(2+)-binding site is contributed by His-159. Fe(2+) is bound by residues Asn-160, Glu-163, and Glu-192. A Zn(2+)-binding site is contributed by Glu-163. A run of 3 helical transmembrane segments spans residues 184 to 204 (WATL…LLLM), 206 to 226 (FIGP…MVFI), and 243 to 263 (TAIY…LLFI).

It belongs to the ZIP transporter (TC 2.A.5) family. ZupT subfamily.

The protein resides in the cell membrane. The enzyme catalyses Zn(2+)(in) = Zn(2+)(out). Its function is as follows. Mediates zinc uptake. May also transport other divalent cations. This Corynebacterium glutamicum (strain ATCC 13032 / DSM 20300 / JCM 1318 / BCRC 11384 / CCUG 27702 / LMG 3730 / NBRC 12168 / NCIMB 10025 / NRRL B-2784 / 534) protein is Zinc transporter ZupT.